The chain runs to 2771 residues: MDVKERKPYRSLTRRRDAERRYTSSSADSEEGKGPQKSYSSSETLKAYDQDARLAYGSRVKDMVPQEAEEFCRTGTNFTLRELGLGEMTPPHGTLYRTDIGLPHCGYSMGASSDADLEADTVLSPEHPVRLWGRSTRSGRSSCLSSRANSNLTLTDTEHENTETDHPSSLQNHPRLRTPPPPLPHAHTPNQHHAASINSLNRGNFTPRSNPSPAPTDHSLSGEPPAGSAQEPTHAQDNWLLNSNIPLETRNLGKQPFLGTLQDNLIEMDILSASRHDGAYSDGHFLFKPGGTSPLFCTTSPGYPLTSSTVYSPPPRPLPRSTFSRPAFNLKKPSKYCNWKCAALSAILISATLVILLAYFVAMHLFGLNWHLQPMEGQMQMYEITEDTASSWPVPTDVSLYPSGGTGLETPDRKGKGAAEGKPSSLFPEDSFIDSGEIDVGRRASQKIPPGTFWRSQVFIDHPVHLKFNVSLGKAALVGIYGRKGLPPSHTQFDFVELLDGRRLLTQEARSLEGPQRQSRGPVPPSSHETGFIQYLDSGIWHLAFYNDGKESEVVSFLTTAIESVDNCPSNCYGNGDCISGTCHCFLGFLGPDCGRASCPVLCSGNGQYMKGRCLCHSGWKGAECDVPTNQCIDVACSSHGTCIMGTCICNPGYKGESCEEVDCMDPTCSSRGVCVRGECHCSVGWGGTNCETPRATCLDQCSGHGTFLPDTGLCNCDPSWTGHDCSIEICAADCGGHGVCVGGTCRCEDGWMGAACDQRACHPRCAEHGTCRDGKCECSPGWNGEHCTIAHYLDRVVKEGCPGLCNGNGRCTLDLNGWHCVCQLGWRGTGCDTSMETGCGDGKDNDGDGLVDCMDPDCCLQPLCHVNPLCLGSPDPLDIIQETQAPVSQQNLNSFYDRIKFLVGRDSTHSIPGENPFDGGHACVIRGQVMTSDGTPLVGVNISFINNPLFGYTISRQDGSFDLVTNGGISIILRFERAPFITQEHTLWLPWDRFFVMETIVMRHEENEIPSCDLSNFARPNPVVSPSPLTSFASSCAEKGPIVPEIQALQEEIVIAGCKMRLSYLSSRTPGYKSVLRISLTHPTIPFNLMKVHLMVAVEGRLFRKWFAAAPDLSYYFIWDKTDVYNQKVFGLSEAFVSVGYEYESCPDLILWEKRTAVLQGYEIDASKLGGWSLDKHHALNIQSGILHKGNGENQFVSQQPPVIGSIMGNGRRRSISCPSCNGLADGNKLLAPVALTCGSDGSLYVGDFNYIRRIFPSGNVTNILEMRNKDFRHSHSPAHKYYLATDPMSGAVFLSDTNSRRVFKVKSTTVVKDLVKNSEVVAGTGDQCLPFDDTRCGDGGKATEATLTNPRGITVDKFGLIYFVDGTMIRRVDQNGIISTLLGSNDLTSARPLSCDSVMEISQVRLEWPTDLAINPMDNSLYVLDNNVVLQISENHQVRIVAGRPMHCQVPGIDHFLLSKVAIHATLESATALAVSHNGVLYIAETDEKKINRIRQVTTSGEISLVAGAPSGCDCKNDANCDCFSGDDGYAKDAKLNTPSSLAVCADGELYVADLGNIRIRFIRKNKPFLNTQNMYELSSPIDQELYLFDTSGKHLYTQSLPTGDYLYNFTYTGDGDITHITDNNGNMVNVRRDSTGMPLWLVVPDGQVYWVTMGTNSALRSVTTQGHELAMMTYHGNSGLLATKSNENGWTTFYEYDSFGRLTNVTFPTGQVSSFRSDTDSSVHVQVETSSKDDVTITTNLSASGAFYTLLQDQVRNSYYIGADGSLRLLLANGMEVALQTEPHLLAGTVNPTVGKRNVTLPIDNGLNLVEWRQRKEQARGQVTVFGRRLRVHNRNLLSLDFDRVTRTEKIYDDHRKFTLRILYDQAGRPSLWSPSSRLNGVNVTYSPGGHIAGIQRGIMSERMEYDQAGRITSRIFADGKMWSYTYLEKSMVLHLHSQRQYIFEFDKNDRLSSVTMPNVARQTLETIRSVGYYRNIYQPPEGNASVIQDFTEDGHLLHTFYLGTGRRVIYKYGKLSKLAETLYDTTKVSFTYDETAGMLKTVNLQNEGFTCTIRYRQIGPLIDRQIFRFTEEGMVNARFDYNYDNSFRVTSMQAVINETPLPIDLYRYDDVSGKTEQFGKFGVIYYDINQIITTAVMTHTKHFDAYGRMKEVQYEIFRSLMYWMTVQYDNMGRVVKKELKVGPYANTTRYSYEYDADGQLQTVSINDKPLWRYSYDLNGNLHLLSPGNSARLTPLRYDLRDRITRLGDVQYKMDEDGFLRQRGGDVFEYNSAGLLIKAYNRASGWSVRYRYDGLGRRVSSKSSHSHHLQFFYADLTNPTKVTHLYNHSSSEITSLYYDLQGHLFAMELSSGDEFYIACDNIGTPLAVFSGTGLMIKQILYTAYGEIYMDTNPNFQIIIGYHGGLYDPLTKLVHMGRRDYDVLAGRWTSPDHELWKRLSSNSIVPFHLYMFKNNNPISNSQDIKCFMTDVNSWLLTFGFQLHNVIPGYPKPDTDAMEPSYELVHTQMKTQEWDNSKSILGVQCEVQKQLKAFVTLERFDQLYGSTITSCQQAPETKKFASSGSIFGKGVKFALKDGRVTTDIISVANEDGRRIAAILNNAHYLENLHFTIDGVDTHYFVKPGPSEGDLAILGLSGGRRTLENGVNVTVSQINTVLSGRTRRYTDIQLQYRALCLNTRYGTTVDEEKVRVLELARQRAVRQAWAREQQRLREGEEGLRAWTDGEKQQVLNTGRVQGYDGFFVTSVEQYPELSDSANNIHFMRQSEMGRR.

A compositionally biased stretch (basic and acidic residues) spans 1–22 (MDVKERKPYRSLTRRRDAERRY). Residues 1–45 (MDVKERKPYRSLTRRRDAERRYTSSSADSEEGKGPQKSYSSSETL) are disordered. The Teneurin N-terminal domain occupies 1-341 (MDVKERKPYR…KPSKYCNWKC (341 aa)). Topologically, residues 1–345 (MDVKERKPYR…YCNWKCAALS (345 aa)) are cytoplasmic. The residue at position 124 (Ser-124) is a Phosphoserine. The segment at 132 to 233 (WGRSTRSGRS…PPAGSAQEPT (102 aa)) is disordered. Low complexity predominate over residues 134-155 (RSTRSGRSSCLSSRANSNLTLT). Over residues 156-166 (DTEHENTETDH) the composition is skewed to basic and acidic residues. At Thr-178 the chain carries Phosphothreonine. Polar residues predominate over residues 191-211 (QHHAASINSLNRGNFTPRSNP). Residues 346 to 366 (AILISATLVILLAYFVAMHLF) form a helical membrane-spanning segment. Topologically, residues 367–2771 (GLNWHLQPME…FMRQSEMGRR (2405 aa)) are extracellular. Residues 403-428 (SGGTGLETPDRKGKGAAEGKPSSLFP) form a disordered region. Residues 410–419 (TPDRKGKGAA) are compositionally biased toward basic and acidic residues. Residue Asn-469 is glycosylated (N-linked (GlcNAc...) asparagine). A disordered region spans residues 509–528 (ARSLEGPQRQSRGPVPPSSH). EGF-like domains follow at residues 564-595 (SVDN…PDCG), 596-626 (RASC…AECD), 628-660 (PTNQ…ESCE), 661-692 (EVDC…TNCE), 694-727 (PRAT…HDCS), 728-759 (IEIC…ACDQ), 760-789 (RACH…EHCT), and 790-833 (IAHY…TGCD). Disulfide bonds link Cys-568/Cys-578, Cys-572/Cys-583, Cys-585/Cys-594, Cys-603/Cys-614, Cys-616/Cys-625, Cys-632/Cys-643, Cys-637/Cys-648, Cys-650/Cys-659, Cys-664/Cys-675, Cys-669/Cys-680, Cys-682/Cys-691, Cys-702/Cys-715, Cys-717/Cys-726, Cys-731/Cys-741, Cys-735/Cys-746, Cys-748/Cys-757, Cys-762/Cys-772, Cys-766/Cys-777, Cys-779/Cys-788, Cys-802/Cys-812, Cys-806/Cys-821, and Cys-823/Cys-832. Residues Asn-942 and Asn-1261 are each glycosylated (N-linked (GlcNAc...) asparagine). 5 NHL repeats span residues 1218–1261 (SCPS…PSGN), 1266–1310 (LEMR…VKST), 1336–1380 (TRCG…NGII), 1395–1446 (LSCD…VAGR), and 1525–1568 (CFSG…IRKN). Residues 1578 to 1597 (YELSSPIDQELYLFDTSGKH) form a YD 1 repeat. Asn-1611 is a glycosylation site (N-linked (GlcNAc...) asparagine). YD repeat units lie at residues 1614 to 1634 (YTGD…VNVR), 1677 to 1696 (YHGN…WTTF), and 1697 to 1719 (YEYD…SSFR). N-linked (GlcNAc...) asparagine glycosylation is found at Asn-1707, Asn-1743, Asn-1801, and Asn-1886. YD repeat units lie at residues 1889-1908 (YSPG…ERME), 1930-1948 (YLEK…YIFE), 1949-1969 (FDKN…QTLE), 1976-1993 (YYRN…VIQD), 1994-2015 (FTED…VIYK), 2016-2033 (YGKL…TKVS), 2036-2056 (YDET…FTCT), 2059-2079 (YRQI…EGMV), 2087-2106 (YDNS…TPLP), 2112-2129 (YDDV…GVIY), 2130-2156 (YDIN…MKEV), 2158-2171 (YEIF…MTVQ), 2172-2195 (YDNM…TRYS), 2198-2218 (YDAD…WRYS), 2219-2239 (YDLN…LTPL), 2241-2261 (YDLR…DEDG), 2273-2293 (YNSA…SVRY), and 2295-2315 (YDGL…LQFF). Asn-1987 is a glycosylation site (N-linked (GlcNAc...) asparagine). Asn-2190 carries an N-linked (GlcNAc...) asparagine glycan. N-linked (GlcNAc...) asparagine glycosylation is present at Asn-2330. One copy of the YD 23 repeat lies at 2341 to 2382 (YDLQGHLFAMELSSGDEFYIACDNIGTPLAVFSGTGLMIKQI). Asn-2648 carries an N-linked (GlcNAc...) asparagine glycan.

This sequence belongs to the tenascin family. Teneurin subfamily. As to quaternary structure, homodimer; disulfide-linked. May also form heterodimer with either TENM1 or TENM2 or TENM3. Expressed in brain and spinal cord (at protein level). Expressed in neurons and oligodendrocytes of the spinal cord. Expressed weakly in kidney, lung and spleen. Expressed in the cortex, CA1, CA2 and CA3 of the hippocampus. Expressed in the white matter, Purkinje cells and molecular layer of the cerebellum.

The protein localises to the cell membrane. It localises to the cell projection. It is found in the nucleus. The protein resides in the cytoplasm. In terms of biological role, involved in neural development, regulating the establishment of proper connectivity within the nervous system. Plays a role in the establishment of the anterior-posterior axis during gastrulation. Regulates the differentiation and cellular process formation of oligodendrocytes and myelination of small-diameter axons in the central nervous system (CNS). Promotes activation of focal adhesion kinase. May function as a cellular signal transducer. This is Teneurin-4 (Tenm4) from Mus musculus (Mouse).